We begin with the raw amino-acid sequence, 120 residues long: Ribonuclease P protein component (120 aa).

It belongs to the RnpA family. Consists of a catalytic RNA component (M1 or rnpB) and a protein subunit.

It catalyses the reaction Endonucleolytic cleavage of RNA, removing 5'-extranucleotides from tRNA precursor.. RNaseP catalyzes the removal of the 5'-leader sequence from pre-tRNA to produce the mature 5'-terminus. It can also cleave other RNA substrates such as 4.5S RNA. The protein component plays an auxiliary but essential role in vivo by binding to the 5'-leader sequence and broadening the substrate specificity of the ribozyme. The chain is Ribonuclease P protein component from Azoarcus sp. (strain BH72).